The primary structure comprises 442 residues: tRNA modification GTPase MnmE (442 aa).

Residues R21, E79, and K118 each coordinate (6S)-5-formyl-5,6,7,8-tetrahydrofolate. Residues G214–N367 form the TrmE-type G domain. N224 contributes to the K(+) binding site. GTP-binding positions include N224–S229, S243–T249, and D268–G271. Residue S228 participates in Mg(2+) binding. K(+)-binding residues include S243, I245, and T248. T249 serves as a coordination point for Mg(2+). K442 contacts (6S)-5-formyl-5,6,7,8-tetrahydrofolate.

Belongs to the TRAFAC class TrmE-Era-EngA-EngB-Septin-like GTPase superfamily. TrmE GTPase family. Homodimer. Heterotetramer of two MnmE and two MnmG subunits. K(+) is required as a cofactor.

The protein localises to the cytoplasm. Its function is as follows. Exhibits a very high intrinsic GTPase hydrolysis rate. Involved in the addition of a carboxymethylaminomethyl (cmnm) group at the wobble position (U34) of certain tRNAs, forming tRNA-cmnm(5)s(2)U34. In Campylobacter jejuni subsp. jejuni serotype O:23/36 (strain 81-176), this protein is tRNA modification GTPase MnmE.